We begin with the raw amino-acid sequence, 217 residues long: Nucleolar protein 12 (217 aa).

A coiled-coil region spans residues 34–98 (GFHKRKVERK…LVTAKTESVQ (65 aa)). The tract at residues 122 to 217 (LGLPLPEQGD…MTGKARHNGE (96 aa)) is disordered. A compositionally biased stretch (acidic residues) spans 130-141 (GDQDGSQEEEMS). Basic residues-rich tracts occupy residues 172-184 (AHSR…KHPR) and 201-217 (KTQR…HNGE).

It belongs to the RRP17 family. As to quaternary structure, interacts with KIAA1191. In terms of tissue distribution, expressed in brain, lung, spleen, kidney and heart.

The protein localises to the nucleus. The protein resides in the nucleolus. Its subcellular location is the cytoplasm. Multifunctional RNA binding protein that plays a role in RNA metabolism and DNA maintenance. Participates in the resolution of DNA stress and the maintenance of genome integrity by localizing to sites of DNA insults. Also plays a role in proper nucleolar organization by limiting nucleolar size and regulating nucleolar number. Mechanistically, regulates the nucleolar levels of fibrillarin and nucleolin, two key players in pre-rRNA processing and ribosome assembly. The polypeptide is Nucleolar protein 12 (Nol12) (Mus musculus (Mouse)).